The following is a 494-amino-acid chain: Alpha-amylase-related protein (494 aa).

Positions 1–20 (MFKFATAVILCLVAASSTLA) are cleaved as a signal peptide. Gln-21 carries the post-translational modification Pyrrolidone carboxylic acid. An intrachain disulfide couples Cys-48 to Cys-104. Asn-118, Gln-169, and Asp-178 together coordinate Ca(2+). Cys-157 and Cys-171 form a disulfide bridge. A chloride-binding site is contributed by Arg-206. The active-site Nucleophile is the Asp-208. His-212 is a Ca(2+) binding site. Glu-245 (proton donor) is an active-site residue. Residues Asn-308 and Arg-343 each coordinate chloride. 3 cysteine pairs are disulfide-bonded: Cys-376–Cys-382, Cys-418–Cys-441, and Cys-448–Cys-460.

This sequence belongs to the glycosyl hydrolase 13 family. In terms of assembly, monomer. Ca(2+) serves as cofactor. The cofactor is chloride.

The protein localises to the secreted. It carries out the reaction Endohydrolysis of (1-&gt;4)-alpha-D-glucosidic linkages in polysaccharides containing three or more (1-&gt;4)-alpha-linked D-glucose units.. This chain is Alpha-amylase-related protein (Amyrel), found in Drosophila bipectinata (Fruit fly).